We begin with the raw amino-acid sequence, 213 residues long: Pyrrolidone-carboxylate peptidase (213 aa).

Active-site residues include glutamate 81, cysteine 144, and histidine 166.

It belongs to the peptidase C15 family. Homotetramer.

It localises to the cytoplasm. The catalysed reaction is Release of an N-terminal pyroglutamyl group from a polypeptide, the second amino acid generally not being Pro.. Removes 5-oxoproline from various penultimate amino acid residues except L-proline. This chain is Pyrrolidone-carboxylate peptidase, found in Pseudomonas fluorescens (strain SBW25).